A 297-amino-acid chain; its full sequence is Large ribosomal subunit protein uL10 (297 aa).

This sequence belongs to the universal ribosomal protein uL10 family. In terms of assembly, part of the 50S ribosomal subunit. Forms part of the ribosomal stalk which helps the ribosome interact with GTP-bound translation factors. Forms a heptameric L10(L12)2(L12)2(L12)2 complex, where L10 forms an elongated spine to which the L12 dimers bind in a sequential fashion.

Functionally, forms part of the ribosomal stalk, playing a central role in the interaction of the ribosome with GTP-bound translation factors. The chain is Large ribosomal subunit protein uL10 from Methanococcus voltae.